Here is a 552-residue protein sequence, read N- to C-terminus: Lysine--tRNA ligase (552 aa).

The 'HIGH' region signature appears at 71–79; it reads PSGLPHLGT. The 'KMSKS' region signature appears at 319–323; the sequence is KISKS. K322 serves as a coordination point for ATP.

The protein belongs to the class-I aminoacyl-tRNA synthetase family.

The protein localises to the cytoplasm. The enzyme catalyses tRNA(Lys) + L-lysine + ATP = L-lysyl-tRNA(Lys) + AMP + diphosphate. The protein is Lysine--tRNA ligase of Caulobacter sp. (strain K31).